Consider the following 123-residue polypeptide: Protein lgg-1 (123 aa).

Gly116 carries the Phosphatidylethanolamine amidated glycine lipid modification. A propeptide spans 117-123 (GEVEKKE) (removed in mature form).

Belongs to the ATG8 family. As to quaternary structure, interacts with sepa-1 (via the LIR motifs); the interaction is direct. Interacts with allo-1 (via the LIR motif). Interacts with sqst-1 (via the LIR motifs); the interaction is direct. Both lipidated and unlipidated forms interact with epg-7 (via the LIR motif); the interaction is direct. Interacts with epg-2 (via the LIR motifs); the interaction is direct. Interacts with atg-13; the interaction is direct. Interacts with unc-51 (via the LIR motif); the interaction is direct. Interacts with atg-7; the interaction is direct. Interacts with atg-3. The interaction with atg-7 and atg-3 may be required for the lipidation of lgg-1. Post-translationally, cleaved by atg-4.1 and/or atg-4.2, after Gly-116 to form a thioester bond with 'Cys-523' of atg-7 (E1-like activating enzyme) before being transferred to 'Cys-255' of atg-3 (E2 conjugating enzyme), in order to be amidated with phosphatidylethanolamine. This lipid modification anchors lgg-1 to membranes and can be reversed by atg-4.2, releasing soluble lgg-1. C-terminal cleavage is essential for autophagosome initiation and biogenesis. Lipidation is not essential for autophagy or development but the lipidated form is involved in cargo recognition and autophagosome biogenesis. Lipidation regulates lgg-2-positive autophagosome formation. Expressed in PLML touch receptor neuron and in the ventral nerve cord. Expressed in AIY interneurons.

The protein resides in the preautophagosomal structure. It localises to the cytoplasmic vesicle. The protein localises to the autophagosome. It is found in the autophagosome membrane. Its subcellular location is the lysosome lumen. The protein resides in the mitochondrion. It localises to the cytoplasm. The protein localises to the phagosome membrane. It is found in the cell membrane. Its subcellular location is the cell projection. The protein resides in the dendrite. It localises to the perikaryon. Functionally, ubiquitin-like modifier involved in the formation of autophagosomal vacuoles (autophagosomes). When lipidated mediates tethering between adjacent membranes and stimulates membrane fusion during autophagy. Recruits lipidated-lgg-2 to maturing autophagosomes. Acts in the aggrephagy pathway, which is the macroautophagic degradation of ubiquitinated protein aggregates, and preferentially interacts with autophagy proteins and substrates containing LIR motifs to mediate autophagosome formation and protein aggregate degradation. In particular, binds to components of the unc-51-atg-13 complex to regulate autophagosome formation and cargo sequestration. Required for the degradation of specific sepa-1- and sqst-1-containing protein aggregates during embryogenesis. Involved in allophagy, which is an autophagic process in which paternal mitochondria and organelles are degraded during fertilization, and moreover is required for the formation of lgg-2-positive allophagic autophagosomes in embryos. Involved in the clearance of apoptotic cells by promoting the delivery of engulfed apoptotic cells to the lysosome. Plays a role in the distribution and clearance of germ cell specific P-granules from somatic cells. Also plays a role in the autophagy-mediated degradation of ribosomal RNA and ribosomal proteins in lysosomes. Involved in xenophagy, the autophagy-mediated degradation of pathogens and pathogen products, such as toxins. Required for normal survival when exposed to pathogenic bacteria S.typhimurium probably by promoting autophagic degradation of intracellular S.typhimurium. Also plays a role in membrane-pore repair. Plays a role in mitophagy. Essential for dauer development and longevity, including longevity in response to moderate, short-term heat shock, also known as a hormetic heat shock. In Caenorhabditis elegans, this protein is Protein lgg-1.